A 169-amino-acid polypeptide reads, in one-letter code: Peptide methionine sulfoxide reductase MsrA (169 aa).

Residue Cys-10 is part of the active site.

It belongs to the MsrA Met sulfoxide reductase family.

It catalyses the reaction L-methionyl-[protein] + [thioredoxin]-disulfide + H2O = L-methionyl-(S)-S-oxide-[protein] + [thioredoxin]-dithiol. It carries out the reaction [thioredoxin]-disulfide + L-methionine + H2O = L-methionine (S)-S-oxide + [thioredoxin]-dithiol. Has an important function as a repair enzyme for proteins that have been inactivated by oxidation. Catalyzes the reversible oxidation-reduction of methionine sulfoxide in proteins to methionine. This chain is Peptide methionine sulfoxide reductase MsrA, found in Streptococcus pyogenes serotype M1.